Consider the following 89-residue polypeptide: Small ribosomal subunit protein uS15 (89 aa).

It belongs to the universal ribosomal protein uS15 family. As to quaternary structure, part of the 30S ribosomal subunit. Forms a bridge to the 50S subunit in the 70S ribosome, contacting the 23S rRNA.

In terms of biological role, one of the primary rRNA binding proteins, it binds directly to 16S rRNA where it helps nucleate assembly of the platform of the 30S subunit by binding and bridging several RNA helices of the 16S rRNA. Forms an intersubunit bridge (bridge B4) with the 23S rRNA of the 50S subunit in the ribosome. The chain is Small ribosomal subunit protein uS15 from Mannheimia succiniciproducens (strain KCTC 0769BP / MBEL55E).